Reading from the N-terminus, the 63-residue chain is Cecropin-1/3 (63 aa).

A signal peptide spans 1 to 23 (MNFYKVFIFVALILAISLGQSEA). Position 62 is an arginine amide (arginine 62).

Belongs to the cecropin family.

It localises to the secreted. Cecropins have lytic and antibacterial activity against several Gram-positive and Gram-negative bacteria. The chain is Cecropin-1/3 (Cec1) from Drosophila virilis (Fruit fly).